Reading from the N-terminus, the 228-residue chain is Probable methylthioribulose-1-phosphate dehydratase (228 aa).

Cysteine 87 contributes to the substrate binding site. Positions 105 and 107 each coordinate Zn(2+). Glutamate 129 (proton donor/acceptor) is an active-site residue. Histidine 185 serves as a coordination point for Zn(2+).

It belongs to the aldolase class II family. MtnB subfamily. It depends on Zn(2+) as a cofactor.

It is found in the cytoplasm. It catalyses the reaction 5-(methylsulfanyl)-D-ribulose 1-phosphate = 5-methylsulfanyl-2,3-dioxopentyl phosphate + H2O. It participates in amino-acid biosynthesis; L-methionine biosynthesis via salvage pathway; L-methionine from S-methyl-5-thio-alpha-D-ribose 1-phosphate: step 2/6. Functionally, catalyzes the dehydration of methylthioribulose-1-phosphate (MTRu-1-P) into 2,3-diketo-5-methylthiopentyl-1-phosphate (DK-MTP-1-P). In Drosophila willistoni (Fruit fly), this protein is Probable methylthioribulose-1-phosphate dehydratase.